The following is a 176-amino-acid chain: Insulin-like growth factor 1 (176 aa).

Positions 45–73 are b; it reads GPETLCGAELVDTLQFVCGERGFYFSKPT. 3 cysteine pairs are disulfide-bonded: C50/C92, C62/C105, and C91/C96. Residues 74-85 form a c region; the sequence is GYGPSSRRSHNR. The interval 86-106 is a; it reads GIVDECCFQSCELRRLEMYCA. Positions 107–114 are d; that stretch reads PVKSGKAA. Positions 115–176 are cleaved as a propeptide — e peptide; that stretch reads RSVRAQRHTD…GNTGGRNYRM (62 aa). A disordered region spans residues 115–176; sequence RSVRAQRHTD…GNTGGRNYRM (62 aa). A compositionally biased stretch (basic and acidic residues) spans 140–161; the sequence is RGTERRTAQHPDKTKPKKEVHQ.

It belongs to the insulin family.

The protein localises to the secreted. The insulin-like growth factors, isolated from plasma, are structurally and functionally related to insulin but have a much higher growth-promoting activity. Acts as a ligand for IGF1R. Binds to the alpha subunit of IGF1R, leading to the activation of the intrinsic tyrosine kinase activity which autophosphorylates tyrosine residues in the beta subunit thus initiatiating a cascade of down-stream signaling events leading to activation of the PI3K-AKT/PKB and the Ras-MAPK pathways. Binds to integrins. Its binding to integrins and subsequent ternary complex formation with integrins and IGFR1 are essential for IGF1 signaling. This Oncorhynchus mykiss (Rainbow trout) protein is Insulin-like growth factor 1.